The primary structure comprises 444 residues: Retinoic acid receptor alpha-A (444 aa).

Residues 1 to 71 are modulating; it reads MYESVDVNPF…PPSPPPPPRI (71 aa). Residues 35–46 show a composition bias toward polar residues; sequence SIRHQHWSGSNH. Residues 35–67 form a disordered region; it reads SIRHQHWSGSNHSIETQSTSSEEIVPSPPSPPP. The segment covering 47–58 has biased composition (low complexity); that stretch reads SIETQSTSSEEI. Residues 72–147 constitute a DNA-binding region (nuclear receptor); sequence YKPCFVCQDK…VGMSKESVRN (76 aa). 2 NR C4-type zinc fingers span residues 75–95 and 111–130; these read CFVC…CEGC and CHRE…CQYC. Positions 148–169 are hinge; that stretch reads DRNKKKKEEKKPECTENYTLSP. An NR LBD domain is found at 170–404; the sequence is DTEQMIDRVR…PLIQEMLENS (235 aa). Positions 395 to 403 match the 9aaTAD motif; the sequence is PLIQEMLEN. Residues 402-444 form a disordered region; that stretch reads ENSEGLESSSGAQGSRASATTPGSCSPSLSPNSAQSSPPTQSP.

This sequence belongs to the nuclear hormone receptor family. NR1 subfamily. As to quaternary structure, heterodimer; with an rxr molecule. Binds DNA preferentially as a rar/rxr heterodimer. As to expression, in the embryo, zygotic expression largely overlaps that of rarab, with high levels in hindbrain, lateral mesoderm and tail bud. In the adult, strong expression in brain and muscle, weaker expression in ovary, liver and digestive tract.

The protein localises to the nucleus. Receptor for retinoic acid. Retinoic acid receptors bind as heterodimers to their target response elements in response to their ligands, all-trans or 9-cis retinoic acid, and regulate gene expression in various biological processes. The rar/rxr heterodimers bind to the retinoic acid response elements (RARE) composed of tandem 5'-AGGTCA-3' sites known as DR1-DR5. Required for hindbrain patterning. In Danio rerio (Zebrafish), this protein is Retinoic acid receptor alpha-A.